We begin with the raw amino-acid sequence, 313 residues long: Thymidylate synthase (313 aa).

Residues M1–H28 form a disordered region. Positions Q18–H28 are enriched in basic and acidic residues. R50 is a dUMP binding site. S114 carries the post-translational modification Phosphoserine. Residues R175–R176, C195–H196, R215–D218, N226, and H256–Y258 contribute to the dUMP site. The active-site Nucleophile is C195. D218 contacts (6R)-5,10-methylene-5,6,7,8-tetrahydrofolate. Residues K287, K292, and K308 each participate in a glycyl lysine isopeptide (Lys-Gly) (interchain with G-Cter in SUMO2) cross-link. A312 is a (6R)-5,10-methylene-5,6,7,8-tetrahydrofolate binding site.

This sequence belongs to the thymidylate synthase family. In terms of assembly, homodimer.

Its subcellular location is the nucleus. The protein localises to the cytoplasm. It localises to the mitochondrion. The protein resides in the mitochondrion matrix. It is found in the mitochondrion inner membrane. The enzyme catalyses dUMP + (6R)-5,10-methylene-5,6,7,8-tetrahydrofolate = 7,8-dihydrofolate + dTMP. The protein operates within pyrimidine metabolism; dTTP biosynthesis. In terms of biological role, catalyzes the reductive methylation of 2'-deoxyuridine 5'-monophosphate (dUMP) to thymidine 5'-monophosphate (dTMP), using the cosubstrate, 5,10- methylenetetrahydrofolate (CH2H4folate) as a 1-carbon donor and reductant and contributes to the de novo mitochondrial thymidylate biosynthesis pathway. The polypeptide is Thymidylate synthase (Homo sapiens (Human)).